A 267-amino-acid chain; its full sequence is Undecaprenyl-diphosphatase 2 (267 aa).

8 helical membrane passes run 4–24, 43–63, 84–104, 109–129, 147–167, 186–206, 219–239, and 243–263; these read IYFIKAFFLGVIEGITEFLPI, EEKVFEVVIQLGGILAVCWLF, FAVIVMISFLPSAIIGALFIH, VLFNTTVVATALIVGGLIILW, IGFKQAIIIGIAQCIAMIPGT, AATEYSFFLAIPTMLGAAIYD, ILAILIGFSAAFISALIVVNA, and FVAKHSLSVFAWYRIALGLII.

It belongs to the UppP family.

It is found in the cell inner membrane. It carries out the reaction di-trans,octa-cis-undecaprenyl diphosphate + H2O = di-trans,octa-cis-undecaprenyl phosphate + phosphate + H(+). Catalyzes the dephosphorylation of undecaprenyl diphosphate (UPP). Confers resistance to bacitracin. The polypeptide is Undecaprenyl-diphosphatase 2 (Shewanella oneidensis (strain ATCC 700550 / JCM 31522 / CIP 106686 / LMG 19005 / NCIMB 14063 / MR-1)).